The sequence spans 185 residues: dCTP deaminase (185 aa).

DCTP-binding positions include 107 to 112, 131 to 133, glutamine 152, tyrosine 166, and glutamine 176; these read KSTYAR and TLE. The Proton donor/acceptor role is filled by glutamate 133.

This sequence belongs to the dCTP deaminase family. In terms of assembly, homotrimer.

It catalyses the reaction dCTP + H2O + H(+) = dUTP + NH4(+). It participates in pyrimidine metabolism; dUMP biosynthesis; dUMP from dCTP (dUTP route): step 1/2. Functionally, catalyzes the deamination of dCTP to dUTP. The polypeptide is dCTP deaminase (Wolbachia pipientis wMel).